A 140-amino-acid chain; its full sequence is Holo-[acyl-carrier-protein] synthase (140 aa).

Mg(2+) is bound by residues D8 and E62.

It belongs to the P-Pant transferase superfamily. AcpS family. Requires Mg(2+) as cofactor.

The protein localises to the cytoplasm. The catalysed reaction is apo-[ACP] + CoA = holo-[ACP] + adenosine 3',5'-bisphosphate + H(+). Its function is as follows. Transfers the 4'-phosphopantetheine moiety from coenzyme A to a Ser of acyl-carrier-protein. In Cupriavidus taiwanensis (strain DSM 17343 / BCRC 17206 / CCUG 44338 / CIP 107171 / LMG 19424 / R1) (Ralstonia taiwanensis (strain LMG 19424)), this protein is Holo-[acyl-carrier-protein] synthase.